A 155-amino-acid polypeptide reads, in one-letter code: Interleukin-2 (155 aa).

Residues 1–20 (MYKMQLLSCIALTLVLVANS) form the signal peptide. Thr23 carries an O-linked (GalNAc...) threonine glycan. A disulfide bond links Cys79 and Cys127.

The protein belongs to the IL-2 family.

It is found in the secreted. Cytokine produced by activated CD4-positive helper T-cells and to a lesser extend activated CD8-positive T-cells and natural killer (NK) cells that plays pivotal roles in the immune response and tolerance. Binds to a receptor complex composed of either the high-affinity trimeric IL-2R (IL2RA/CD25, IL2RB/CD122 and IL2RG/CD132) or the low-affinity dimeric IL-2R (IL2RB and IL2RG). Interaction with the receptor leads to oligomerization and conformation changes in the IL-2R subunits resulting in downstream signaling starting with phosphorylation of JAK1 and JAK3. In turn, JAK1 and JAK3 phosphorylate the receptor to form a docking site leading to the phosphorylation of several substrates including STAT5. This process leads to activation of several pathways including STAT, phosphoinositide-3-kinase/PI3K and mitogen-activated protein kinase/MAPK pathways. Functions as a T-cell growth factor and can increase NK-cell cytolytic activity as well. Promotes strong proliferation of activated B-cells and subsequently immunoglobulin production. Plays a pivotal role in regulating the adaptive immune system by controlling the survival and proliferation of regulatory T-cells, which are required for the maintenance of immune tolerance. Moreover, participates in the differentiation and homeostasis of effector T-cell subsets, including Th1, Th2, Th17 as well as memory CD8-positive T-cells. The chain is Interleukin-2 (IL2) from Halichoerus grypus (Gray seal).